A 396-amino-acid polypeptide reads, in one-letter code: 1-deoxy-D-xylulose 5-phosphate reductoisomerase (396 aa).

The NADPH site is built by Thr-15, Gly-16, Ser-17, Ile-18, Gly-41, and Asn-130. 1-deoxy-D-xylulose 5-phosphate is bound at residue Lys-131. Glu-132 serves as a coordination point for NADPH. Position 155 (Asp-155) interacts with Mn(2+). 1-deoxy-D-xylulose 5-phosphate is bound by residues Ser-156, Glu-157, Ser-181, and His-204. A Mn(2+)-binding site is contributed by Glu-157. Gly-210 is a binding site for NADPH. Residues Ser-217, Asn-222, Lys-223, and Glu-226 each contribute to the 1-deoxy-D-xylulose 5-phosphate site. Position 226 (Glu-226) interacts with Mn(2+).

Belongs to the DXR family. Mg(2+) is required as a cofactor. Mn(2+) serves as cofactor.

It carries out the reaction 2-C-methyl-D-erythritol 4-phosphate + NADP(+) = 1-deoxy-D-xylulose 5-phosphate + NADPH + H(+). Its pathway is isoprenoid biosynthesis; isopentenyl diphosphate biosynthesis via DXP pathway; isopentenyl diphosphate from 1-deoxy-D-xylulose 5-phosphate: step 1/6. Its function is as follows. Catalyzes the NADPH-dependent rearrangement and reduction of 1-deoxy-D-xylulose-5-phosphate (DXP) to 2-C-methyl-D-erythritol 4-phosphate (MEP). This is 1-deoxy-D-xylulose 5-phosphate reductoisomerase from Bifidobacterium longum (strain DJO10A).